The chain runs to 729 residues: Bromo and FHA domain-containing protein DDB_G0267958 (729 aa).

A compositionally biased stretch (low complexity) spans 46–79; sequence LPIPNTSNTNPPMNQSSSPTTTTTTPTTTTTPTT. The tract at residues 46–83 is disordered; the sequence is LPIPNTSNTNPPMNQSSSPTTTTTTPTTTTTPTTAEPA. Residues 112 to 167 enclose the FHA domain; it reads LIIGSDTELADIQVVRPGIYPKHVEIIYDKEKKKFYLNPLIDPKDSDNVRLNFVPF. Composition is skewed to low complexity over residues 208–221, 229–275, and 283–306; these read IPSN…NTPI, PPSS…ATKT, and PTKT…AVKK. Disordered stretches follow at residues 208–361 and 403–442; these read IPSN…MSCK and SRRP…PKVP. A compositionally biased stretch (acidic residues) spans 310–341; it reads DDDYGDDYNEEEDDDDEEEEEEEEEEEEEEEV. The stretch at 315–352 forms a coiled coil; that stretch reads DDYNEEEDDDDEEEEEEEEEEEEEEEVESKQIKVVNSK. A compositionally biased stretch (low complexity) spans 406-431; that stretch reads PTAPVTPTKPTSTKKVTTPKKATVVK. Residues 498-617 enclose the Bromo domain; that stretch reads SNEKKEILKC…IELYKALSNS (120 aa). Residues 659 to 718 are a coiled coil; the sequence is SKNKEQTVPQEEDEEEEEEEEEEEEEEEEGEEGKEDEEEEEKEEEEGEENEEEEDVEIDD. Residues 659–729 form a disordered region; that stretch reads SKNKEQTVPQ…EIDQESDDDQ (71 aa). Over residues 668–729 the composition is skewed to acidic residues; sequence QEEDEEEEEE…EIDQESDDDQ (62 aa).

The sequence is that of Bromo and FHA domain-containing protein DDB_G0267958 from Dictyostelium discoideum (Social amoeba).